A 460-amino-acid polypeptide reads, in one-letter code: Cysteine--tRNA ligase (460 aa).

Position 28 (Cys-28) interacts with Zn(2+). A 'HIGH' region motif is present at residues 30–40; it reads MTVYDYCHLGH. Cys-209, His-234, and Glu-238 together coordinate Zn(2+). The short motif at 266 to 270 is the 'KMSKS' region element; it reads KMSKS. Lys-269 contacts ATP.

Belongs to the class-I aminoacyl-tRNA synthetase family. As to quaternary structure, monomer. Zn(2+) serves as cofactor.

It is found in the cytoplasm. It catalyses the reaction tRNA(Cys) + L-cysteine + ATP = L-cysteinyl-tRNA(Cys) + AMP + diphosphate. The chain is Cysteine--tRNA ligase from Pseudomonas syringae pv. syringae (strain B728a).